A 1241-amino-acid chain; its full sequence is High-affinity potassium transport protein (1241 aa).

The next 2 helical transmembrane spans lie at 49-70 (NFIA…ILLY) and 78-98 (IDAL…TVDV). N-linked (GlcNAc...) asparagine glycosylation is present at asparagine 100. Residues 107 to 127 (IILYIICCISTPIAVHSCLAF) form a helical membrane-spanning segment. 3 disordered regions span residues 162–241 (TART…SLDD), 253–316 (KYHG…TPED), and 329–570 (EGTA…QLQQ). The segment covering 164–177 (RTMTKSKTGGTQRV) has biased composition (polar residues). Composition is skewed to basic and acidic residues over residues 181 to 191 (GKSDKRDDFQE) and 199 to 214 (VNRD…HNSR). Residues 215 to 238 (DSNSNANTNSSNNNSINHNGSSGS) are compositionally biased toward low complexity. N-linked (GlcNAc...) asparagine glycosylation is found at asparagine 223, asparagine 227, asparagine 233, asparagine 257, asparagine 274, asparagine 353, and asparagine 364. Polar residues-rich tracts occupy residues 268 to 280 (NTAT…QKLK) and 345 to 365 (TDGT…TMNE). Over residues 366-375 (SKIRIQDKGA) the composition is skewed to basic and acidic residues. Over residues 380-411 (DQDSVLHSSNSSACTSDEDSLPTNFGGTTPSL) the composition is skewed to polar residues. N-linked (GlcNAc...) asparagine glycans are attached at residues asparagine 389 and asparagine 442. 2 stretches are compositionally biased toward basic residues: residues 446 to 455 (PPRKASKSKR) and 482 to 497 (HLPK…KRRL). Residues 498-509 (STGSIDKNSSSD) are compositionally biased toward polar residues. N-linked (GlcNAc...) asparagine glycans are attached at residues asparagine 505 and asparagine 538. The segment covering 520-545 (NDDDDGNEGDNMEEYFADNESGDEDD) has biased composition (acidic residues). The segment covering 561 to 570 (KQQQQHQLQQ) has biased composition (low complexity). N-linked (GlcNAc...) asparagine glycosylation is found at asparagine 584, asparagine 660, asparagine 681, asparagine 691, and asparagine 741. The interval 677-714 (NSHRNGSEDVSSDSNETTYPLNGNNDHSQNDANGYPTY) is disordered. Residues 684–708 (EDVSSDSNETTYPLNGNNDHSQNDA) show a composition bias toward polar residues. Transmembrane regions (helical) follow at residues 784-806 (ILVV…WINL), 819-840 (VSPT…GLTL), 844-864 (SMMS…FIII), 868-888 (GFPI…PDLS), and 904-924 (CFTL…LVGL). Asparagine 925 carries an N-linked (GlcNAc...) asparagine glycan. A run of 2 helical transmembrane segments spans residues 929–949 (WILF…SKGY) and 977–997 (SIQV…AISI). Positions 1011 to 1073 (YGEMGGKPED…ENENPNEEST (63 aa)) are disordered. The segment covering 1021-1041 (TDTEEDGDCDDEDDDNEEEES) has biased composition (acidic residues). Residues 1050–1062 (GKSKKETKKKKKR) show a composition bias toward basic residues. 2 helical membrane passes run 1084-1104 (QLSF…ICER) and 1117-1137 (VFTI…SLGY). Asparagine 1141 is a glycosylation site (N-linked (GlcNAc...) asparagine). Residues 1222–1241 (DELKHKRSLSRSSKRSTKTN) form a disordered region. Residues 1226-1241 (HKRSLSRSSKRSTKTN) show a composition bias toward basic residues.

This sequence belongs to the TrkH potassium transport family.

The protein resides in the membrane. This protein is required for high-affinity potassium transport. The chain is High-affinity potassium transport protein (TRK1) from Saccharomyces uvarum (Yeast).